A 417-amino-acid polypeptide reads, in one-letter code: NADH-quinone oxidoreductase subunit D (417 aa).

This sequence belongs to the complex I 49 kDa subunit family. As to quaternary structure, NDH-1 is composed of 14 different subunits. Subunits NuoB, C, D, E, F, and G constitute the peripheral sector of the complex.

The protein localises to the cell inner membrane. The catalysed reaction is a quinone + NADH + 5 H(+)(in) = a quinol + NAD(+) + 4 H(+)(out). Its function is as follows. NDH-1 shuttles electrons from NADH, via FMN and iron-sulfur (Fe-S) centers, to quinones in the respiratory chain. The immediate electron acceptor for the enzyme in this species is believed to be ubiquinone. Couples the redox reaction to proton translocation (for every two electrons transferred, four hydrogen ions are translocated across the cytoplasmic membrane), and thus conserves the redox energy in a proton gradient. The protein is NADH-quinone oxidoreductase subunit D of Janthinobacterium sp. (strain Marseille) (Minibacterium massiliensis).